Here is a 269-residue protein sequence, read N- to C-terminus: Thiazole synthase (269 aa).

The active-site Schiff-base intermediate with DXP is the Lys109. 1-deoxy-D-xylulose 5-phosphate-binding positions include Gly170, 196 to 197 (AG), and 218 to 219 (NT).

Belongs to the ThiG family. Homotetramer. Forms heterodimers with either ThiH or ThiS.

Its subcellular location is the plastid. It is found in the chloroplast. The catalysed reaction is [ThiS sulfur-carrier protein]-C-terminal-Gly-aminoethanethioate + 2-iminoacetate + 1-deoxy-D-xylulose 5-phosphate = [ThiS sulfur-carrier protein]-C-terminal Gly-Gly + 2-[(2R,5Z)-2-carboxy-4-methylthiazol-5(2H)-ylidene]ethyl phosphate + 2 H2O + H(+). The protein operates within cofactor biosynthesis; thiamine diphosphate biosynthesis. Its function is as follows. Catalyzes the rearrangement of 1-deoxy-D-xylulose 5-phosphate (DXP) to produce the thiazole phosphate moiety of thiamine. Sulfur is provided by the thiocarboxylate moiety of the carrier protein ThiS. In vitro, sulfur can be provided by H(2)S. This is Thiazole synthase from Thalassiosira pseudonana (Marine diatom).